A 251-amino-acid polypeptide reads, in one-letter code: Probable transcriptional regulatory protein NFA_37020 (251 aa).

This sequence belongs to the TACO1 family.

It localises to the cytoplasm. The protein is Probable transcriptional regulatory protein NFA_37020 of Nocardia farcinica (strain IFM 10152).